A 450-amino-acid polypeptide reads, in one-letter code: MNDTIAAIATPLGKGAISVIKISGNSALNILKQLTQKQDFTPRYAYVCDIFSNGVLLDKALVIYFKAPYSFTGEDVCEIQCHGNPLLAQNILQACLNLGARLAKAGEFSKKAFLNHKMDLSEIEASVQLILCEDESVLNALARQLKGELKIFIEEARGNLLKLLASSEVLIDYSEEDIPSDFLDEVSLNLEKQIASFKDLLDFSNTQKQKNKGHALSIVGKPNAGKSSLLNAMLLEERALVSDIKGTTRDTIEEVIELQGHKVRLIDTAGIRESADKIERLGIEKSLKSLENCDIILGVFDLSKPLEKEDFNLIDTLNRAKKPCIVVLNKNDLAPKLELEILKSHLKIPYSLLETNTLNSKACLKDLSQKISAFFPKLDTQNKLLLTSLAQKTALENAIFELQNAKNHLETLELFSYHLLSAIESLNLLTRPYETSQMLDSMFSEFCLGK.

K21, E78, and K117 together coordinate (6S)-5-formyl-5,6,7,8-tetrahydrofolate. Residues G213–P376 form the TrmE-type G domain. N223 contributes to the K(+) binding site. GTP contacts are provided by residues N223–S228, S242–T248, and D267–G270. Residue S227 participates in Mg(2+) binding. K(+)-binding residues include S242, I244, and T247. Residue T248 coordinates Mg(2+). K450 contacts (6S)-5-formyl-5,6,7,8-tetrahydrofolate.

The protein belongs to the TRAFAC class TrmE-Era-EngA-EngB-Septin-like GTPase superfamily. TrmE GTPase family. Homodimer. Heterotetramer of two MnmE and two MnmG subunits. K(+) is required as a cofactor.

It is found in the cytoplasm. In terms of biological role, exhibits a very high intrinsic GTPase hydrolysis rate. Involved in the addition of a carboxymethylaminomethyl (cmnm) group at the wobble position (U34) of certain tRNAs, forming tRNA-cmnm(5)s(2)U34. This is tRNA modification GTPase MnmE from Helicobacter pylori (strain Shi470).